We begin with the raw amino-acid sequence, 491 residues long: CRM-domain containing factor CFM9, mitochondrial (491 aa).

The transit peptide at 1–25 directs the protein to the mitochondrion; sequence MNQVFKGWSRGMSTSRGRSMRSKVE. Residues 1-34 form a disordered region; it reads MNQVFKGWSRGMSTSRGRSMRSKVESRMRKESGK. The span at 22–34 shows a compositional bias: basic and acidic residues; the sequence is SKVESRMRKESGK. Positions 90 to 187 constitute a CRM domain; that stretch reads ELFTSEQVQA…RNYRQPKNLI (98 aa). Basic and acidic residues predominate over residues 255–265; sequence PYVFHGDKQSE. Disordered regions lie at residues 255–287 and 328–491; these read PYVFHGDKQSERGTSVDNREESEPGDEDSDQEE and RSRT…WDSD. Acidic residues predominate over residues 277 to 287; the sequence is EPGDEDSDQEE. The span at 345 to 359 shows a compositional bias: basic and acidic residues; sequence RRNDRDTHSQRRPND. A compositionally biased stretch (acidic residues) spans 360–375; it reads SDDDDDDGELDSEDDE. The span at 392–416 shows a compositional bias: basic and acidic residues; that stretch reads RPREDFKRRSPDPRPRPRAQVRSDD. Positions 453–478 are enriched in polar residues; that stretch reads TVSASSSKQSRFRNNSSRDGINNSKS.

In terms of tissue distribution, highly expressed in roots and meristemic regions of young seedlings. Expressed at low levels in stems, trichomes and stigma.

The protein resides in the mitochondrion. Functionally, involved in the splicing of group II introns in mitochondria. Required for the splicing of mitochondrial introns found in nad1, nad2, nad4, nad5, nad7, rps3 and cox2 genes. Splicing of mitochondrial introns is crucial for mitochondrial biogenesis and function, plant growth and development, and plant response to abiotic stresses. This chain is CRM-domain containing factor CFM9, mitochondrial, found in Arabidopsis thaliana (Mouse-ear cress).